We begin with the raw amino-acid sequence, 309 residues long: Curved DNA-binding protein (309 aa).

The J domain occupies 5-69 (DYYAILGVKP…ERRAEYDQLR (65 aa)).

The protein resides in the cytoplasm. The protein localises to the nucleoid. In terms of biological role, DNA-binding protein that preferentially recognizes a curved DNA sequence. It is probably a functional analog of DnaJ; displays overlapping activities with DnaJ, but functions under different conditions, probably acting as a molecular chaperone in an adaptive response to environmental stresses other than heat shock. Lacks autonomous chaperone activity; binds native substrates and targets them for recognition by DnaK. Its activity is inhibited by the binding of CbpM. The chain is Curved DNA-binding protein from Serratia proteamaculans (strain 568).